The sequence spans 917 residues: Probable dipeptidyl-aminopeptidase B (917 aa).

The segment at 1–78 (MGVEKRINDE…EGDLEEGFVP (78 aa)) is disordered. Topologically, residues 1-90 (MGVEKRINDE…GGWSAPRKVS (90 aa)) are cytoplasmic. A compositionally biased stretch (basic and acidic residues) spans 16 to 26 (AERDDKSRDSI). The segment covering 27-49 (DSTSTASISLALLGGANGSAHGS) has biased composition (low complexity). A compositionally biased stretch (basic and acidic residues) spans 55-65 (RKSENQEKYHD). Residues 91–111 (VIFTLIVTLCIAGWLVAFFVL) form a helical; Signal-anchor for type II membrane protein membrane-spanning segment. Topologically, residues 112–917 (LGRHKDSSKD…LGLINILRNG (806 aa)) are vacuolar. Residues Asn-350 and Asn-465 are each glycosylated (N-linked (GlcNAc...) asparagine). Ser-754 serves as the catalytic Charge relay system. The N-linked (GlcNAc...) asparagine glycan is linked to Asn-813. Active-site charge relay system residues include Asp-831 and His-864.

Belongs to the peptidase S9B family.

Its subcellular location is the vacuole membrane. The enzyme catalyses Release of an N-terminal dipeptide, Xaa-Yaa-|-Zaa-, from a polypeptide, preferentially when Yaa is Pro, provided Zaa is neither Pro nor hydroxyproline.. In terms of biological role, type IV dipeptidyl-peptidase which removes N-terminal dipeptides sequentially from polypeptides having unsubstituted N-termini provided that the penultimate residue is proline. This Coccidioides posadasii (strain C735) (Valley fever fungus) protein is Probable dipeptidyl-aminopeptidase B (DAPB).